The following is a 654-amino-acid chain: NADPH-dependent diflavin oxidoreductase 1 (654 aa).

Over residues 1 to 10 (MSGSQSSGSP) the composition is skewed to low complexity. Positions 1-22 (MSGSQSSGSPGSPGPPGPPGRS) are disordered. Positions 23–167 (ALVVYGSETG…TFIPWLAGFR (145 aa)) constitute a Flavodoxin-like domain. Residues 29–34 (SETGNA), 76–79 (STTG), and 114–123 (LGDSSYPKFN) each bind FMN. Residues 235-485 (HDSLTATLVQ…QLQRGGLNSS (251 aa)) enclose the FAD-binding FR-type domain. FAD-binding positions include Arg-389, 419 to 422 (RQFS), and 458 to 461 (GVCT). NADP(+)-binding positions include Thr-500, 568–569 (SR), and 574–578 (KVYVQ). Trp-654 is an FAD binding site.

This sequence belongs to the NADPH-dependent diflavin oxidoreductase NDOR1 family. The protein in the N-terminal section; belongs to the flavodoxin family. It in the C-terminal section; belongs to the flavoprotein pyridine nucleotide cytochrome reductase family. In terms of assembly, interacts with dre2; as part of the cytosolic iron-sulfur (Fe-S) protein assembly (CIA) machinery. FAD serves as cofactor. FMN is required as a cofactor.

It localises to the cytoplasm. Its subcellular location is the mitochondrion. It carries out the reaction 2 oxidized [2Fe-2S]-[protein] + NADPH = 2 reduced [2Fe-2S]-[protein] + NADP(+) + H(+). Functionally, NADPH-dependent reductase which is a central component of the cytosolic iron-sulfur (Fe-S) protein assembly (CIA) machinery. Transfers electrons from NADPH via its FAD and FMN prosthetic groups to the [2Fe-2S] cluster of dre2, another key component of the CIA machinery. In turn, this reduced cluster provides electrons for assembly of cytosolic iron-sulfur cluster proteins. Positively controls H(2)O(2)-induced cell death. This Emericella nidulans (strain FGSC A4 / ATCC 38163 / CBS 112.46 / NRRL 194 / M139) (Aspergillus nidulans) protein is NADPH-dependent diflavin oxidoreductase 1.